Here is a 200-residue protein sequence, read N- to C-terminus: Interleukin 17-like protein (200 aa).

A signal peptide spans 1–26; that stretch reads MGNFFLFAMTLVVCSVIVLLTGVADS. The N-linked (GlcNAc...) asparagine glycan is linked to Asn46. Intrachain disulfides connect Cys122-Cys175 and Cys127-Cys177. N-linked (GlcNAc...) asparagine glycosylation occurs at Asn192.

The protein belongs to the IL-17 family. In terms of tissue distribution, expressed in several tissues including hemocytes, gills, mantle, adductor muscle, labial palps, digestive glands and heart with highest levels in gills and lowest levels in adductor muscle and heart.

It localises to the secreted. The chain is Interleukin 17-like protein from Magallana gigas (Pacific oyster).